The following is a 338-amino-acid chain: Bifunctional methylenetetrahydrofolate dehydrogenase/cyclohydrolase 2, mitochondrial (338 aa).

Substrate-binding positions include 89–93 (YVRNK) and 136–138 (VQL). Residues 205-207 (GRS) and R238 contribute to the NAD(+) site. Residue 314-318 (PGGVG) coordinates substrate.

It belongs to the tetrahydrofolate dehydrogenase/cyclohydrolase family. Mg(2+) is required as a cofactor. Widely expressed.

It is found in the mitochondrion inner membrane. The enzyme catalyses (6R)-5,10-methylene-5,6,7,8-tetrahydrofolate + NADP(+) = (6R)-5,10-methenyltetrahydrofolate + NADPH. It carries out the reaction (6R)-5,10-methylene-5,6,7,8-tetrahydrofolate + NAD(+) = (6R)-5,10-methenyltetrahydrofolate + NADH. It catalyses the reaction (6R)-5,10-methenyltetrahydrofolate + H2O = (6R)-10-formyltetrahydrofolate + H(+). The protein operates within one-carbon metabolism; tetrahydrofolate interconversion. In terms of biological role, bifunctional mitochondrial folate-interconverting enzyme that has both NAD/NADP-dependent methylenetetrahydrofolate dehydrogenase and methenyltetrahydrofolate cyclohydrolase activities. Functionally, has no NAD/NADP-dependent methylenetetrahydrofolate dehydrogenase activity. The sequence is that of Bifunctional methylenetetrahydrofolate dehydrogenase/cyclohydrolase 2, mitochondrial from Rattus norvegicus (Rat).